The chain runs to 349 residues: S-adenosylmethionine decarboxylase proenzyme 3 (349 aa).

Residues glutamate 9 and glutamate 12 contribute to the active site. Glutamate 68 is a binding site for substrate. Catalysis depends on serine 69, which acts as the Schiff-base intermediate with substrate; via pyruvic acid. Residue serine 69 is modified to Pyruvic acid (Ser); by autocatalysis. Catalysis depends on cysteine 83, which acts as the Proton donor; for catalytic activity. Residues serine 235 and histidine 248 each act as proton acceptor; for processing activity in the active site. Glutamate 252 contacts substrate.

It belongs to the eukaryotic AdoMetDC family. The cofactor is pyruvate. Post-translationally, is synthesized initially as an inactive proenzyme. Formation of the active enzyme involves a self-maturation process in which the active site pyruvoyl group is generated from an internal serine residue via an autocatalytic post-translational modification. Two non-identical subunits are generated from the proenzyme in this reaction, and the pyruvate is formed at the N-terminus of the alpha chain, which is derived from the carboxyl end of the proenzyme. The post-translation cleavage follows an unusual pathway, termed non-hydrolytic serinolysis, in which the side chain hydroxyl group of the serine supplies its oxygen atom to form the C-terminus of the beta chain, while the remainder of the serine residue undergoes an oxidative deamination to produce ammonia and the pyruvoyl group blocking the N-terminus of the alpha chain.

The catalysed reaction is S-adenosyl-L-methionine + H(+) = S-adenosyl 3-(methylsulfanyl)propylamine + CO2. The protein operates within amine and polyamine biosynthesis; S-adenosylmethioninamine biosynthesis; S-adenosylmethioninamine from S-adenosyl-L-methionine: step 1/1. Its function is as follows. Essential for biosynthesis of the polyamines spermidine and spermine. Essential for polyamine homeostasis, and normal plant embryogenesis, growth and development. The protein is S-adenosylmethionine decarboxylase proenzyme 3 of Arabidopsis thaliana (Mouse-ear cress).